A 265-amino-acid polypeptide reads, in one-letter code: Hydroxyethylthiazole kinase 2 (265 aa).

Met39 is a binding site for substrate. Lys115 and Thr168 together coordinate ATP. Gly195 provides a ligand contact to substrate.

It belongs to the Thz kinase family. Requires Mg(2+) as cofactor.

The enzyme catalyses 5-(2-hydroxyethyl)-4-methylthiazole + ATP = 4-methyl-5-(2-phosphooxyethyl)-thiazole + ADP + H(+). It participates in cofactor biosynthesis; thiamine diphosphate biosynthesis; 4-methyl-5-(2-phosphoethyl)-thiazole from 5-(2-hydroxyethyl)-4-methylthiazole: step 1/1. In terms of biological role, catalyzes the phosphorylation of the hydroxyl group of 4-methyl-5-beta-hydroxyethylthiazole (THZ). In Clostridium botulinum (strain 657 / Type Ba4), this protein is Hydroxyethylthiazole kinase 2.